A 430-amino-acid polypeptide reads, in one-letter code: Dihydrofolate synthase/folylpolyglutamate synthase (430 aa).

ATP is bound at residue 51–54 (GKGS). A Mg(2+)-binding site is contributed by Ser75. 114-117 (TEYG) is a binding site for 7,8-dihydropteroate. Glu145 lines the Mg(2+) pocket. 152–154 (FDS) contributes to the 7,8-dihydropteroate binding site. Position 172 (His172) interacts with Mg(2+). Residues Gln263, Arg302, and Asp315 each coordinate ATP.

Belongs to the folylpolyglutamate synthase family. Monomer. Mg(2+) serves as cofactor.

It catalyses the reaction 7,8-dihydropteroate + L-glutamate + ATP = 7,8-dihydrofolate + ADP + phosphate + H(+). It carries out the reaction (6S)-5,6,7,8-tetrahydrofolyl-(gamma-L-Glu)(n) + L-glutamate + ATP = (6S)-5,6,7,8-tetrahydrofolyl-(gamma-L-Glu)(n+1) + ADP + phosphate + H(+). Its pathway is cofactor biosynthesis; tetrahydrofolate biosynthesis; 7,8-dihydrofolate from 2-amino-4-hydroxy-6-hydroxymethyl-7,8-dihydropteridine diphosphate and 4-aminobenzoate: step 2/2. It functions in the pathway cofactor biosynthesis; tetrahydrofolylpolyglutamate biosynthesis. Its function is as follows. Functions in two distinct reactions of the de novo folate biosynthetic pathway. Catalyzes the addition of a glutamate residue to dihydropteroate (7,8-dihydropteroate or H2Pte) to form dihydrofolate (7,8-dihydrofolate monoglutamate or H2Pte-Glu). Also catalyzes successive additions of L-glutamate to tetrahydrofolate, leading to folylpolyglutamate derivatives. The chain is Dihydrofolate synthase/folylpolyglutamate synthase (folC) from Bacillus subtilis (strain 168).